Reading from the N-terminus, the 398-residue chain is Probable pectate lyase P56 (398 aa).

The signal sequence occupies residues 1 to 27 (MEYSYRTKINVLFIVLILFVFAALGTA). N-linked (GlcNAc...) asparagine glycosylation occurs at Asn-135. Residues Asp-192, Asp-217, and Asp-221 each coordinate Ca(2+). N-linked (GlcNAc...) asparagine glycosylation occurs at Asn-228. Arg-273 is an active-site residue.

It belongs to the polysaccharide lyase 1 family. It depends on Ca(2+) as a cofactor. As to expression, expressed in anthers and pollen.

The enzyme catalyses Eliminative cleavage of (1-&gt;4)-alpha-D-galacturonan to give oligosaccharides with 4-deoxy-alpha-D-galact-4-enuronosyl groups at their non-reducing ends.. It functions in the pathway glycan metabolism; pectin degradation; 2-dehydro-3-deoxy-D-gluconate from pectin: step 2/5. Might be needed during pollen development and tube growth. This Solanum lycopersicum (Tomato) protein is Probable pectate lyase P56 (LAT56).